The sequence spans 310 residues: Putative methyltransferase mtx subunit H (310 aa).

Belongs to the MtrH family. In terms of assembly, may be part of a complex composed of 3 subunits; MtxA, MtxH and MtxX.

The sequence is that of Putative methyltransferase mtx subunit H (mtxH) from Methanosarcina mazei (strain ATCC BAA-159 / DSM 3647 / Goe1 / Go1 / JCM 11833 / OCM 88) (Methanosarcina frisia).